The sequence spans 421 residues: Histidine--tRNA ligase (421 aa).

It belongs to the class-II aminoacyl-tRNA synthetase family. As to quaternary structure, homodimer.

Its subcellular location is the cytoplasm. The enzyme catalyses tRNA(His) + L-histidine + ATP = L-histidyl-tRNA(His) + AMP + diphosphate + H(+). The sequence is that of Histidine--tRNA ligase from Fervidobacterium nodosum (strain ATCC 35602 / DSM 5306 / Rt17-B1).